The primary structure comprises 232 residues: Endonuclease V (232 aa).

Positions 43 and 109 each coordinate Mg(2+).

This sequence belongs to the endonuclease V family. Mg(2+) is required as a cofactor.

Its subcellular location is the cytoplasm. The enzyme catalyses Endonucleolytic cleavage at apurinic or apyrimidinic sites to products with a 5'-phosphate.. DNA repair enzyme involved in the repair of deaminated bases. Selectively cleaves double-stranded DNA at the second phosphodiester bond 3' to a deoxyinosine leaving behind the intact lesion on the nicked DNA. In Thermofilum pendens (strain DSM 2475 / Hrk 5), this protein is Endonuclease V.